The following is a 312-amino-acid chain: Non-structural protein 2 (312 aa).

Residues 107–109, Lys-185, and 218–220 contribute to the ATP site; these read QVR and HGK. The tract at residues 202–238 is RNA-binding; that stretch reads FAAYIRYNFNKFAAISHGKRHWRLVLHSQLMSHAERL. The active-site For NTPase and RTPase activities is His-222. ATP is bound at residue Arg-224.

Belongs to the rotavirus NSP2 family. In terms of assembly, homooctamer. Interacts with VP1; this interaction is weak. Interacts with NSP5; this interaction leads to up-regulation of NSP5 phosphorylation and formation of viral factories. Interacts with host DCP1A, DCP1B, DDX6, EDC4 and EIF2S1/eIF2-alpha; these interactions are probably part of the sequestration of some host SGs and PBs proteins in viral factories. Mg(2+) serves as cofactor.

Its subcellular location is the host cytoplasm. Participates in replication and packaging of the viral genome. Plays a crucial role, together with NSP5, in the formation of virus factories (viroplasms), which are large inclusions in the host cytoplasm where replication intermediates are assembled and viral RNA replication takes place. Displays ssRNA binding, NTPase, RNA triphosphatase (RTPase) and ATP-independent helix-unwinding activities. The unwinding activity may prepare and organize plus-strand RNAs for packaging and replication by removing interfering secondary structures. The RTPase activity plays a role in the removal of the gamma-phosphate from the rotavirus RNA minus strands of dsRNA genome segments. Participates in the selective exclusion of host proteins from stress granules (SG) and P bodies (PB). Also participates in the sequestration of these remodeled organelles in viral factories. The polypeptide is Non-structural protein 2 (Rotavirus C (isolate RVC/Human/United Kingdom/Bristol/1989) (RV-C)).